The sequence spans 230 residues: uncharacterized protein (230 aa).

A helical transmembrane segment spans residues 19 to 39 (GIFQVLLQLVLAMMTVWDFAG). Residue asparagine 41 is glycosylated (N-linked (GlcNAc...) asparagine; by host). Residues 55–75 (SFLLVLYTGLKQILEYMFSIC) form a helical membrane-spanning segment. N-linked (GlcNAc...) asparagine; by host glycosylation is found at asparagine 86, asparagine 157, asparagine 168, and asparagine 182. Positions 172–196 (TNLHKYQNDENDTEEDSEDIEKNSD) form a coiled coil. Positions 178–205 (QNDENDTEEDSEDIEKNSDPKENSDIDS) are disordered. The segment covering 180 to 190 (DENDTEEDSED) has biased composition (acidic residues). Positions 191 to 201 (IEKNSDPKENS) are enriched in basic and acidic residues.

The protein localises to the membrane. This is an uncharacterized protein from Acanthamoeba polyphaga mimivirus (APMV).